A 131-amino-acid chain; its full sequence is Profilin (131 aa).

This sequence belongs to the profilin family. In terms of assembly, occurs in many kinds of cells as a complex with monomeric actin in a 1:1 ratio.

The protein localises to the cytoplasm. The protein resides in the cytoskeleton. Its function is as follows. Binds to actin and affects the structure of the cytoskeleton. At high concentrations, profilin prevents the polymerization of actin, whereas it enhances it at low concentrations. By binding to PIP2, it inhibits the formation of IP3 and DG. The sequence is that of Profilin from Citrus sinensis (Sweet orange).